Here is an 87-residue protein sequence, read N- to C-terminus: RNA-binding protein Hfq (87 aa).

Residues 9–68 (DPFLNALRRERIPVSIYLVNGIKLQGQIESFDQFVILLKNTVSQMVYKHAISTVVPARAV) form the Sm domain.

The protein belongs to the Hfq family. In terms of assembly, homohexamer.

RNA chaperone that binds small regulatory RNA (sRNAs) and mRNAs to facilitate mRNA translational regulation in response to envelope stress, environmental stress and changes in metabolite concentrations. Also binds with high specificity to tRNAs. This chain is RNA-binding protein Hfq, found in Aeromonas hydrophila subsp. hydrophila (strain ATCC 7966 / DSM 30187 / BCRC 13018 / CCUG 14551 / JCM 1027 / KCTC 2358 / NCIMB 9240 / NCTC 8049).